Reading from the N-terminus, the 186-residue chain is Chromophore lyase CpcS/CpeS 1 (186 aa).

The protein belongs to the CpcS/CpeS biliprotein lyase family.

Covalently attaches a chromophore to Cys residue(s) of phycobiliproteins. The polypeptide is Chromophore lyase CpcS/CpeS 1 (Synechocystis sp. (strain ATCC 27184 / PCC 6803 / Kazusa)).